The following is a 483-amino-acid chain: MYIGIDLGTSGVKAILLNEQGEVVASHTEKLTVSRPHPLWSEQDPEQWWLATDTAMKALGAHDSLRHVKGLGIAGQMHGATLLDKSLQVLRPAILWNDGRCAEECQLLEDKVSASRQITGNLMMPGFTAPKLLWVQRHEAAVFSQVDKVLLPKDYLRLRMTGELASDMSDAAGTMWLDVARRDWSDEMLAACDLSRDAMPALFEGSDVTGQLRPEVAQAWNMPPALVVGGGGDNAAGAVGIGMADAGQAMLSLGTSGVYFAVSEGFLSKPESAVHSFCHACRGRWHLMSVMLSAASCLDWAAKLTGLASVPALIAAAQTADESAGPVWFLPYLSGERTPHNNPQAKGVFFGLTHQHGPAELARAVLEGVGYALADGMDVVHACAIKPEAITLIGGGRARYWRQMLADISGLQLDYRTGGDVGPALGAARLAHVAVHDEADRPGLLKPLPLEQAHRPDDRRVAHYAPQREIFARIFSKLKPLMS.

Residue 77 to 78 participates in substrate binding; it reads MH. D233 acts as the Proton acceptor in catalysis.

This sequence belongs to the FGGY kinase family.

It catalyses the reaction D-xylulose + ATP = D-xylulose 5-phosphate + ADP + H(+). Functionally, catalyzes the phosphorylation of D-xylulose to D-xylulose 5-phosphate. The sequence is that of Xylulose kinase from Klebsiella pneumoniae.